Here is a 711-residue protein sequence, read N- to C-terminus: Consortin (711 aa).

Disordered regions lie at residues 1-157 (MDDS…NDPP), 294-332 (AVGT…GCHQ), 370-389 (ETAG…KDSS), 394-432 (PPTE…PGLI), and 457-496 (PRDQ…ESAL). Residues 1–650 (MDDSDPPTYS…LEQDEVGGGS (650 aa)) are Cytoplasmic-facing. Residues 63 to 77 (VSEQDSLNNNESFPS) show a composition bias toward polar residues. Residues 109-120 (PAKRSPRAKKSS) show a composition bias toward basic residues. Composition is skewed to basic and acidic residues over residues 396-407 (TEDHCGVARDPK) and 457-471 (PRDQ…EPRQ). A compositionally biased stretch (polar residues) spans 478 to 487 (DGKSAQSQAG). Residues 651–671 (CILLILLCIATVFLSVGGTAL) traverse the membrane as a helical segment. The Extracellular portion of the chain corresponds to 672–711 (YCTLGNIESPVCTDFADNVDFYYTKLLQGVAGLKHWVYLS).

It belongs to the CNST family. As to quaternary structure, interacts with connexins GJA1/CX43, GJB1/CX32, GJB2/CX26, GJB3/CX31, GJB6/CX30 and GJC1/CX45. Also interacts with GGA1 and GGA2. Does not interact with PANX1.

Its subcellular location is the cell membrane. It is found in the golgi apparatus. The protein resides in the trans-Golgi network membrane. The protein localises to the cytoplasmic vesicle. It localises to the secretory vesicle. Its function is as follows. Required for targeting of connexins to the plasma membrane. The protein is Consortin (Cnst) of Mus musculus (Mouse).